The sequence spans 856 residues: MAP kinase phosphatase with leucine-rich repeats protein 3 (856 aa).

Residues 1 to 10 (MGNSHSSENG) are compositionally biased toward low complexity. Disordered stretches follow at residues 1–24 (MGNS…GGGS), 84–195 (VKKN…SSVL), and 214–326 (DDNS…NAKD). A lipid anchor (N-myristoyl glycine) is attached at Gly2. The segment covering 11–24 (GNSGSGGGSGGGGS) has biased composition (gly residues). Over residues 90–142 (NSSNNNSNNNSNNNNNNNTLNNSTIITTTTTTTTTSTPTTTIMITPPQQQQQQ) the composition is skewed to low complexity. A compositionally biased stretch (polar residues) spans 155–165 (ESSTPNEQQIR). 2 stretches are compositionally biased toward low complexity: residues 178 to 195 (ESSF…SSVL) and 224 to 243 (QQQQ…QQTQ). 2 stretches are compositionally biased toward polar residues: residues 254–265 (IVNNKSSSTTNI) and 272–281 (AQTSRSTSIP). Low complexity predominate over residues 306–323 (NSLSSSNIITPNNTTNTN). LRR repeat units follow at residues 344–365 (KIFS…ILSI), 370–391 (EIQE…QLVK), 392–413 (SLTT…VFIE), 416–437 (SLTS…IDQI), 439–461 (NLKY…SNLS), 462–484 (QLIS…DDLI), 485–506 (NLRM…RKLV), and 507–528 (NLVT…FAYL). Positions 554-577 (NINSNNNDSNNSNNNNNNNNDNNN) are disordered. The region spanning 632-773 (IPSEIIPGIF…LLKYEAKLFC (142 aa)) is the Tyrosine-protein phosphatase domain. Cys717 serves as the catalytic Phosphocysteine intermediate. The tract at residues 810 to 856 (INNSSNSNNNNSTDNSNNSSTSTTPNLSSLSSDSSSSASLSKLSISK) is disordered.

It belongs to the protein-tyrosine phosphatase family. Non-receptor class dual specificity subfamily.

The catalysed reaction is O-phospho-L-tyrosyl-[protein] + H2O = L-tyrosyl-[protein] + phosphate. It carries out the reaction O-phospho-L-seryl-[protein] + H2O = L-seryl-[protein] + phosphate. It catalyses the reaction O-phospho-L-threonyl-[protein] + H2O = L-threonyl-[protein] + phosphate. In terms of biological role, probable phosphatase with dual specificity toward Ser/Thr and Tyr-containing proteins. The chain is MAP kinase phosphatase with leucine-rich repeats protein 3 (mpl3) from Dictyostelium discoideum (Social amoeba).